The sequence spans 497 residues: Protein FAM114A2 (497 aa).

The tract at residues M1–A54 is disordered. Residues L19–S34 show a composition bias toward basic and acidic residues. A phosphoserine mark is found at S84 and S205. Positions V344–K364 are disordered.

The protein belongs to the FAM114 family.

The protein is Protein FAM114A2 (Fam114a2) of Mus musculus (Mouse).